Consider the following 578-residue polypeptide: Malonate--CoA ligase ACSF3, mitochondrial (578 aa).

Residues 1-19 (MRVGAFLGRSLFSCSHVRG) constitute a mitochondrion transit peptide. 205–213 (TSGTTGRPK) is a binding site for ATP. The disordered stretch occupies residues 394–413 (QNPRKEGTSYTTHAQGDSTG). ATP-binding residues include Asp-459, Arg-473, and Lys-565.

Belongs to the ATP-dependent AMP-binding enzyme family.

It localises to the mitochondrion. The enzyme catalyses tetracosanoate + ATP + CoA = tetracosanoyl-CoA + AMP + diphosphate. It carries out the reaction malonate + ATP + CoA = malonyl-CoA + AMP + diphosphate. In terms of biological role, catalyzes the initial reaction in intramitochondrial fatty acid synthesis, by activating malonate and methylmalonate, but not acetate, into their respective CoA thioester. May have some preference toward very-long-chain substrates. The sequence is that of Malonate--CoA ligase ACSF3, mitochondrial from Xenopus laevis (African clawed frog).